The chain runs to 234 residues: uncharacterized protein (234 aa).

7 helical membrane passes run 25–45, 57–77, 85–105, 108–128, 142–162, 163–183, and 203–223; these read LMGA…TFFL, LFFL…QGLA, LPIF…TLLM, ATDI…LSVY, AFGV…FFAS, TGLT…LIAW, and WAIS…LFLL.

It belongs to the BI1 family.

It localises to the cell membrane. This is an uncharacterized protein from Lactococcus lactis subsp. lactis (strain IL1403) (Streptococcus lactis).